Here is a 353-residue protein sequence, read N- to C-terminus: MTDFQETLSSVSKRFLELYRSKILSQWRGTNGSSEEEKRFNSLIQQNGFARQIFGLYKSLCFRYENDAWYSVVLDILDLDLIYSNVDKAVQDNNASDIEYQDYLVKELLRYFKRDFFSWCNKPNCSKCGTDEHLEWVGTDRANSEEAKYQCGNVEVYRCTLTGDITRFPRYNDPIKLLQTRTGRCGEWCNVFTLILKSFGLNARYIWNKEDHVWCEYYSPNLKRWVHLDCCEQSFDEPHIYSKNWNKKMSYVLAFSNDIVADVSGRYILQNNLPRNAISENELNFMCTYLTKTLRKDFNDDQIYALACRDEQERLSLEKTKPSKDTSTTTLTGTKGRESGSTAWKQQRGEDGS.

Residues cysteine 125, cysteine 128, and cysteine 159 each coordinate Zn(2+). Catalysis depends on cysteine 185, which acts as the Nucleophile. Catalysis depends on residues histidine 212 and aspartate 229. Glutamate 232 contributes to the substrate binding site. The interval 316–353 is disordered; it reads SLEKTKPSKDTSTTTLTGTKGRESGSTAWKQQRGEDGS. The segment covering 325–334 has biased composition (low complexity); it reads DTSTTTLTGT.

The protein belongs to the transglutaminase-like superfamily. PNGase family. The cofactor is Zn(2+).

It localises to the cytoplasm. The catalysed reaction is Hydrolysis of an N(4)-(acetyl-beta-D-glucosaminyl)asparagine residue in which the glucosamine residue may be further glycosylated, to yield a (substituted) N-acetyl-beta-D-glucosaminylamine and a peptide containing an aspartate residue.. Specifically deglycosylates the denatured form of N-linked glycoproteins in the cytoplasm and assists their proteasome-mediated degradation. Cleaves the beta-aspartyl-glucosamine (GlcNAc) of the glycan and the amide side chain of Asn, converting Asn to Asp. Prefers proteins containing high-mannose over those bearing complex type oligosaccharides. Can recognize misfolded proteins in the endoplasmic reticulum that are exported to the cytosol to be destroyed and deglycosylate them, while it has no activity toward native proteins. Deglycosylation is a prerequisite for subsequent proteasome-mediated degradation of some, but not all, misfolded glycoproteins. The polypeptide is Peptide-N(4)-(N-acetyl-beta-glucosaminyl)asparagine amidase (PNG1) (Kluyveromyces lactis (strain ATCC 8585 / CBS 2359 / DSM 70799 / NBRC 1267 / NRRL Y-1140 / WM37) (Yeast)).